Consider the following 968-residue polypeptide: RNA polymerase-associated protein RapA (968 aa).

Positions Asp164–Asn334 constitute a Helicase ATP-binding domain. Residue Asp177–Thr184 participates in ATP binding. The DEAH box motif lies at Asp280–His283. Residues Arg490–Gly662 form the Helicase C-terminal domain.

The protein belongs to the SNF2/RAD54 helicase family. RapA subfamily. As to quaternary structure, interacts with the RNAP. Has a higher affinity for the core RNAP than for the holoenzyme. Its ATPase activity is stimulated by binding to RNAP.

Its function is as follows. Transcription regulator that activates transcription by stimulating RNA polymerase (RNAP) recycling in case of stress conditions such as supercoiled DNA or high salt concentrations. Probably acts by releasing the RNAP, when it is trapped or immobilized on tightly supercoiled DNA. Does not activate transcription on linear DNA. Probably not involved in DNA repair. In Shigella boydii serotype 18 (strain CDC 3083-94 / BS512), this protein is RNA polymerase-associated protein RapA.